A 349-amino-acid polypeptide reads, in one-letter code: Thiamine-phosphate synthase (349 aa).

The tract at residues 1–125 is unknown; it reads MGCESSLDPR…SAEAAAIRYG (125 aa). A disordered region spans residues 63–85; it reads RARSTVTDPGAGMEHPAQLDRHS. The thiamine-phosphate synthase stretch occupies residues 126 to 349; the sequence is LYDLEVTCLT…LLSSLSRPTL (224 aa). Residues 177-181 and Asn209 contribute to the 4-amino-2-methyl-5-(diphosphooxymethyl)pyrimidine site; that span reads QHRCK. Mg(2+)-binding residues include Asp210 and Asp229. 4-amino-2-methyl-5-(diphosphooxymethyl)pyrimidine-binding residues include Ser248 and Lys277. A 2-[(2R,5Z)-2-carboxy-4-methylthiazol-5(2H)-ylidene]ethyl phosphate-binding site is contributed by Gly304.

The protein belongs to the thiamine-phosphate synthase family. Requires Mg(2+) as cofactor.

It carries out the reaction 2-[(2R,5Z)-2-carboxy-4-methylthiazol-5(2H)-ylidene]ethyl phosphate + 4-amino-2-methyl-5-(diphosphooxymethyl)pyrimidine + 2 H(+) = thiamine phosphate + CO2 + diphosphate. The catalysed reaction is 2-(2-carboxy-4-methylthiazol-5-yl)ethyl phosphate + 4-amino-2-methyl-5-(diphosphooxymethyl)pyrimidine + 2 H(+) = thiamine phosphate + CO2 + diphosphate. The enzyme catalyses 4-methyl-5-(2-phosphooxyethyl)-thiazole + 4-amino-2-methyl-5-(diphosphooxymethyl)pyrimidine + H(+) = thiamine phosphate + diphosphate. Its pathway is cofactor biosynthesis; thiamine diphosphate biosynthesis; thiamine phosphate from 4-amino-2-methyl-5-diphosphomethylpyrimidine and 4-methyl-5-(2-phosphoethyl)-thiazole: step 1/1. Its function is as follows. Condenses 4-methyl-5-(beta-hydroxyethyl)thiazole monophosphate (THZ-P) and 2-methyl-4-amino-5-hydroxymethyl pyrimidine pyrophosphate (HMP-PP) to form thiamine monophosphate (TMP). The sequence is that of Thiamine-phosphate synthase from Parasynechococcus marenigrum (strain WH8102).